The chain runs to 112 residues: Mediator of RNA polymerase II transcription subunit 11 (112 aa).

This sequence belongs to the Mediator complex subunit 11 family. Component of the Mediator complex, which is composed of at least 21 subunits that form three structurally distinct submodules. The Mediator head module, the middle module, and the tail module. The head and the middle modules interact directly with RNA polymerase II, whereas the elongated tail module interacts with gene-specific regulatory proteins. Med11 is part of the head module. Forms a heterodimer with med22. The med11/22 heterodimer binds to and stabilizes the central head subunit med17.

The protein resides in the cytoplasm. It is found in the nucleus. Functionally, component of the Mediator complex, a coactivator involved in the regulated transcription of nearly all RNA polymerase II-dependent genes. Mediator functions as a bridge to convey information from gene-specific regulatory proteins to the basal RNA polymerase II transcription machinery. Mediator is recruited to promoters by direct interactions with regulatory proteins and serves as a scaffold for the assembly of a functional pre-initiation complex (PIC) with RNA polymerase II and the general transcription factors. The essential med11/22 heterodimer specifically functions in promoting stable PIC formation. The protein is Mediator of RNA polymerase II transcription subunit 11 (med11) of Schizosaccharomyces pombe (strain 972 / ATCC 24843) (Fission yeast).